We begin with the raw amino-acid sequence, 180 residues long: Inner membrane-spanning protein YciB (180 aa).

Transmembrane regions (helical) follow at residues 22 to 42 (IYVA…LTWL), 50 to 70 (MTLI…VFHN), 76 to 96 (WKVT…QVVL), 121 to 141 (AAWA…AFWL), and 149 to 169 (FKVF…GIYI).

The protein belongs to the YciB family.

Its subcellular location is the cell inner membrane. In terms of biological role, plays a role in cell envelope biogenesis, maintenance of cell envelope integrity and membrane homeostasis. This chain is Inner membrane-spanning protein YciB, found in Edwardsiella ictaluri (strain 93-146).